The sequence spans 275 residues: uncharacterized protein (275 aa).

Positions 97, 102, 136, and 140 each coordinate [4Fe-4S] cluster. A siroheme-binding site is contributed by C140.

This sequence belongs to the nitrite and sulfite reductase 4Fe-4S domain family.

This is an uncharacterized protein from Methanocaldococcus jannaschii (strain ATCC 43067 / DSM 2661 / JAL-1 / JCM 10045 / NBRC 100440) (Methanococcus jannaschii).